The chain runs to 436 residues: GTPase Obg (436 aa).

In terms of domain architecture, Obg spans Met1–Leu159. Residues Ala160–Asp335 form the OBG-type G domain. Residues Gly166–Ser173, Phe191–Asp195, Asp213–Gly216, Thr285–Asp288, and Ser316–Val318 contribute to the GTP site. Mg(2+) contacts are provided by Ser173 and Thr193. The OCT domain maps to Lys357–Glu436.

It belongs to the TRAFAC class OBG-HflX-like GTPase superfamily. OBG GTPase family. Monomer. Mg(2+) is required as a cofactor.

The protein resides in the cytoplasm. Its function is as follows. An essential GTPase which binds GTP, GDP and possibly (p)ppGpp with moderate affinity, with high nucleotide exchange rates and a fairly low GTP hydrolysis rate. Plays a role in control of the cell cycle, stress response, ribosome biogenesis and in those bacteria that undergo differentiation, in morphogenesis control. The polypeptide is GTPase Obg (Oenococcus oeni (strain ATCC BAA-331 / PSU-1)).